Here is a 196-residue protein sequence, read N- to C-terminus: Probable GTP-binding protein EngB (196 aa).

The EngB-type G domain occupies 22–193 (SLPEVAFVGR…LEEIRKAKGE (172 aa)). GTP is bound by residues 30–37 (GRSNVGKS), 57–61 (GRTQL), 75–78 (DLPG), 142–145 (TKSD), and 172–174 (FSA). Mg(2+) contacts are provided by serine 37 and threonine 59.

This sequence belongs to the TRAFAC class TrmE-Era-EngA-EngB-Septin-like GTPase superfamily. EngB GTPase family. Requires Mg(2+) as cofactor.

In terms of biological role, necessary for normal cell division and for the maintenance of normal septation. This Syntrophus aciditrophicus (strain SB) protein is Probable GTP-binding protein EngB.